We begin with the raw amino-acid sequence, 3083 residues long: MAAIMIGSISVPIVESARCATVQTGNRVNIVAPGHVAVCKPQMKSHSYYKHASEKLSKQASESINILNSFFDTDPEMRFRLTRNEMSKVKKGPNGRMILRKPRAQRVLERISFEKIEKGAERQVLPWRVYATVTSIINTFTDERNGIANSSLRSPFYKRSCRKEKKKIVCENVVRSASVNNLCDRVLKIAREKNIPVEMIGKKKNRHTLTFKNFKGSFIGKVSLAHERGQMRHVEMSYEQFGFILQAICRVTNTRCVRDEDIKPGCSGWVLGDDHELTQKFSRLPCLVIRGRDDEGIVNALEPVFFYDDVDHYSSQPEVQFFQGWRRMFDNFKPSSDHVCKVDHGNEECGELAAIFSQALFPVVKLSCQTCREKLSRVSFEEFKDSLAINFTVHKSEWDSLKENPHHDNVLKLIKGATQATQNLKLSSEVMKLVQNHTSTHMKQIQDINRALMKGSLVTQDELDLALKQLLEMTQWFKNHMHLTGEEALKTFRNKRSSKAMINPSLLCDNQLDKNGNFVWGERGYHSKRLFKNFFEEVIPSEGYTKYIVRNFPNGTRKLAIGSLIVPLNLDRARTALLGESIEKEPLTSACVSQQNGNYIHSCCCVTMDDGTPMYSDVKSPTKRHLVIGASGDPKYIDLPASEADRMYIAKEGYCYLNIFLAMLVNVNENEAKDFTKMIRDVLIPMLGQWPSLMDVATAAYILGVFHPETRCAELPRILVDHATQTMHVIDSYGSLTVGYHVLKAGTVNHLIQFASNDLQSEMKHYRVGGTPTQRIKLEEQLIKGIFKPKLMMQLLQDDPYVLILGMVSPTILVHMYRMRHFERGIEMWIKRDHEVGKIFVILEQLTRKVALTEVLVDQLDLISEASPHLLEIMKGCQDNQRAYVPALDLLTVQVEREFSNKELKVNGYPDLQQTLYDMREKIYAKQLHDSWQELSLLEKSCVTVRLKRFSIFTERKLTQQAKDGKRVSSLQFVHECFITTRVHAKSIRDVGMRKFNEALVGTCKFLFTCGFKIFARCYSDIIYLVNVCLIFSLVLQMSNTVRSMISATREEKERALANKADENERTLMHMYHIFSKKQDDAPLYSEFLEHVRNVRPDLEETLLYMAGAEIVTPQAKSAVQVQFEKIIAVVALLTMCFDAERSDAIFKILTKLKTVFGTVGETVRLQGLEDIENLEDDKKLTIDFDINTNEAQSSTTFDVHFDDWWNRQLQQNRTVPHYRTTGKFLEFTRNTAAFVANEIASSNEGEFLVRGAVGSGKSTSLPAHLAKKGKVLLLEPTRPLAENVSRQLAGDPFFQNVTLRMRGLSCFGSSNITVMTSGYAFHYYVNNPHQMMEFDFIIIDECHVTDSATIAFNCALKEYNFAGKLIKVSATPPGRECDFDTQFAVKVKTEDHLSFQAFVGAQRTGSNADMIQHGNNILVYVASYNEVDMLSKLLTERQFSVTKVDGRTMQLGKTTIETHGTSQKPHFIVATNIIENGVTLDVDCVVDFGLKVVAELDSESRCVRYSKKPVNYGERIQRLGRVGRSKPGTALRIGHTEKGIENIPEFIATEAAALSFAYGLSVTTHGVSTNILGKCTVKQMKCALNFELTPFFTTHLIRHDGSMHPLIHEELKQFKLRDSEMVLNKVALPHQFVSQWMTQGDYEHIGVHIQCNENTRIPFYTNGIPDRVYEKIWKCIQENKNDALFGRLSSACSTKVSYTLSTDPAALPRTIAIIDHLLAEEMMKRNHFDMISSAVTGYSFSLAGIADSFRKRYMRDHTAHNIAILQQARAQLLEFDSKNVNINNLSDLEGIGVIKSVVLQSKQEVSNFLGLRGKWDGRKFANDVILAIMTLLGGGWFMWEYFTKKVNEPVRVESKKRRSQKLKFRDAYDRKVGREIFGDDETIGRTFGEAYTKRGKVKGNNSTKGMGRKTRNFVHLYGVEPENYSFIRFVDPLTGHTLDESTHTDISLVQEEFGNIREKFLENDLISRQSIINKPGIQAYFMGKGTAEALKFDFTPHVPSLSCSNSNAHAGYPERENELRQTGTPVKVSLKDVPEKNEHVELESKSIYKGVRDYNGISTIVCQLTNDSDRLKETMYGIGYGPIIITNGHLFRKNNGTILVRSWHGEFTVKNTTTLKVHFIEGKDVVLVRMPKTFPPFKSNASFRAPKREERACLVGTNFQEKSLRSTVSESSMTNPRRTGSYWIHWISTNEGDCGLPMVSTTDGKLIGLHGKASTVSSKNYFVPFTDDFMATHLSKLDDLTWTQHWLWQPSKIAWGLLNLVDEQPGPEFRISNLVKDLFNSGVETQSKRERWVYESCEGNLRAVGSAQSALVTKHVVKGKCPFFEEYLQTHAEASAYFRPLMGEYQPSKLNKEAFKKDFFKYNKPVIVNQLDHDKFLEAVDGVIRMMCDFEFNECRFITDPEEIYSSLNMKAAIGAQYRGKKKEYFEGLDNFDMERLLFQSCERLFNGYKGLWNGSLKAELRPLEKVQANKTRTFTAAPIDTLLGAKVCVDDFNNEFYSKNLKCPWTVGMSKFYGGWDKLMRALPDGWLYCHADGSQFDSSLTPALLNAVLIIRSFYMEDWWVGQEMLENLYAEIVYTPILAPDGTIFKKFRGNNSGQPSTVVDNTLMVVISIYYACIKFGWGYDEIENRLVFFANGDDLILAVKDEDSGLLDNMSASFSELGLNYDFSERTHKREDLWFMSHQAMLVDGMYIPKLERERIVSILEWDRSKEVMHRTEAICAAMIEAWGHTELLHEIRKFYLWFVEKEEVRELAALGKAPYIAETALRKLYTDKGAETSELARYLQALHQDVFFEQRDTVMLQSDTQTKEADAGAAKRDKDEEKEKKKDVASSSANEKTMTATAKDKDVNAGSHGKIVPRLSKITKKMSLPRVKGSVILDIDHLLEYKPDQIELYNTRASHQQFASWFNQVKAEYDLNEQQMGVVMNGFMVWCIENGTSPDINGVWFMMDGDEQVEYPLKPIVENAKPTLRQIMHHFSDAAEAYIEMRNAEAPYMPRYGLLRNLRDRSLARYAFDFYEVNSKTPDRAREAVAQMKAAALSNVSSRLFGLDGNVATNSEDTERHTARDVNRNMHTLLGVNTMQ.

One can recognise a Peptidase S30 domain in the interval 173–313 (VVRSASVNNL…VFFYDDVDHY (141 aa)). Residues H226, E235, and S267 each act as for P1 proteinase activity in the active site. The Involved in interaction with stylet and aphid transmission motif lies at 365-368 (KLSC). An Involved in virions binding and aphid transmission motif is present at residues 621 to 623 (PTK). The Peptidase C6 domain maps to 647-769 (MYIAKEGYCY…QSEMKHYRVG (123 aa)). Catalysis depends on for helper component proteinase activity residues C655 and H728. Positions 1239-1391 (EIASSNEGEF…TQFAVKVKTE (153 aa)) constitute a Helicase ATP-binding domain. An ATP-binding site is contributed by 1252–1259 (GAVGSGKS). The short motif at 1341 to 1344 (DECH) is the DECH box element. The Helicase C-terminal domain occupies 1410 to 1569 (DMIQHGNNIL…GLSVTTHGVS (160 aa)). Positions 1894–1903 (KRGKVKGNNS) match the Nuclear localization signal motif. Y1918 carries the post-translational modification O-(5'-phospho-RNA)-tyrosine. The Peptidase C4 domain occupies 2045-2263 (SKSIYKGVRD…IAWGLLNLVD (219 aa)). Active-site for nuclear inclusion protein A activity residues include H2090, D2125, and C2195. The RdRp catalytic domain maps to 2529–2653 (WLYCHADGSQ…AVKDEDSGLL (125 aa)). Residues 2805–2854 (SDTQTKEADAGAAKRDKDEEKEKKKDVASSSANEKTMTATAKDKDVNAGS) are disordered. Residues 2808–2831 (QTKEADAGAAKRDKDEEKEKKKDV) show a composition bias toward basic and acidic residues. Over residues 2832–2843 (ASSSANEKTMTA) the composition is skewed to polar residues.

The protein belongs to the potyviridae genome polyprotein family. In terms of assembly, interacts with host eIF4E protein (via cap-binding region); this interaction mediates the translation of the VPg-viral RNA conjugates. Part of a complex that comprises VPg, RNA, host EIF4E and EIF4G; this interaction mediates the translation of the VPg-viral RNA conjugates. VPg is uridylylated by the polymerase and is covalently attached to the 5'-end of the genomic RNA. This uridylylated form acts as a nucleotide-peptide primer for the polymerase. In terms of processing, potyviral RNA is expressed as two polyproteins which undergo post-translational proteolytic processing. Genome polyprotein is processed by NIa-pro, P1 and HC-pro proteinases resulting in the production of at least ten individual proteins. P3N-PIPO polyprotein is cleaved by P1 and HC-pro proteinases resulting in the production of three individual proteins. The P1 proteinase and the HC-pro cleave only their respective C-termini autocatalytically. 6K1 is essential for proper proteolytic separation of P3 from CI.

Its subcellular location is the host cytoplasmic vesicle. It localises to the host nucleus. The protein localises to the virion. The enzyme catalyses RNA(n) + a ribonucleoside 5'-triphosphate = RNA(n+1) + diphosphate. The catalysed reaction is Hydrolyzes glutaminyl bonds, and activity is further restricted by preferences for the amino acids in P6 - P1' that vary with the species of potyvirus, e.g. Glu-Xaa-Xaa-Tyr-Xaa-Gln-|-(Ser or Gly) for the enzyme from tobacco etch virus. The natural substrate is the viral polyprotein, but other proteins and oligopeptides containing the appropriate consensus sequence are also cleaved.. It catalyses the reaction Hydrolyzes a Gly-|-Gly bond at its own C-terminus, commonly in the sequence -Tyr-Xaa-Val-Gly-|-Gly, in the processing of the potyviral polyprotein.. In terms of biological role, required for aphid transmission and also has proteolytic activity. Only cleaves a Gly-Gly dipeptide at its own C-terminus. Interacts with virions and aphid stylets. Acts as a suppressor of RNA-mediated gene silencing, also known as post-transcriptional gene silencing (PTGS), a mechanism of plant viral defense that limits the accumulation of viral RNAs. May have RNA-binding activity. Has helicase activity. It may be involved in replication. Functionally, indispensable for virus replication. Its function is as follows. Mediates the cap-independent, EIF4E-dependent translation of viral genomic RNAs. Binds to the cap-binding site of host EIF4E and thus interferes with the host EIF4E-dependent mRNA export and translation. VPg-RNA directly binds EIF4E and is a template for transcription. Also forms trimeric complexes with EIF4E-EIF4G, which are templates for translation. In terms of biological role, has RNA-binding and proteolytic activities. An RNA-dependent RNA polymerase that plays an essential role in the virus replication. Functionally, involved in aphid transmission, cell-to-cell and systemis movement, encapsidation of the viral RNA and in the regulation of viral RNA amplification. In Zucchini yellow mosaic virus (strain Reunion Island) (ZYMV), this protein is Genome polyprotein.